The sequence spans 324 residues: Beta-ketoacyl-[acyl-carrier-protein] synthase III (324 aa).

Residues Cys-112 and His-249 contribute to the active site. The segment at 250–254 is ACP-binding; that stretch reads QANRR. Asn-279 is an active-site residue.

Belongs to the thiolase-like superfamily. FabH family. As to quaternary structure, homodimer.

The protein localises to the cytoplasm. The catalysed reaction is malonyl-[ACP] + acetyl-CoA + H(+) = 3-oxobutanoyl-[ACP] + CO2 + CoA. Its pathway is lipid metabolism; fatty acid biosynthesis. Functionally, catalyzes the condensation reaction of fatty acid synthesis by the addition to an acyl acceptor of two carbons from malonyl-ACP. Catalyzes the first condensation reaction which initiates fatty acid synthesis and may therefore play a role in governing the total rate of fatty acid production. Possesses both acetoacetyl-ACP synthase and acetyl transacylase activities. Its substrate specificity determines the biosynthesis of branched-chain and/or straight-chain of fatty acids. In Streptococcus pyogenes serotype M4 (strain MGAS10750), this protein is Beta-ketoacyl-[acyl-carrier-protein] synthase III.